Here is a 47-residue protein sequence, read N- to C-terminus: Delta-actitoxin-Axm1d (47 aa).

Disulfide bonds link C4–C44, C6–C34, and C27–C45.

This sequence belongs to the sea anemone sodium channel inhibitory toxin family. Type I subfamily.

The protein localises to the secreted. It is found in the nematocyst. Binds specifically to voltage-gated sodium channels (Nav), thereby delaying their inactivation during signal transduction. Thus it strongly stimulates mammalian cardiac muscle contraction. This Anthopleura xanthogrammica (Giant green sea anemone) protein is Delta-actitoxin-Axm1d.